Here is a 145-residue protein sequence, read N- to C-terminus: Endoribonuclease YbeY (145 aa).

The Zn(2+) site is built by His-109, His-113, and His-119.

The protein belongs to the endoribonuclease YbeY family. The cofactor is Zn(2+).

It is found in the cytoplasm. In terms of biological role, single strand-specific metallo-endoribonuclease involved in late-stage 70S ribosome quality control and in maturation of the 3' terminus of the 16S rRNA. In Vesicomyosocius okutanii subsp. Calyptogena okutanii (strain HA), this protein is Endoribonuclease YbeY.